The primary structure comprises 404 residues: Proteasomal ubiquitin receptor ADRM1-B (404 aa).

One can recognise a Pru domain in the interval 17 to 130; it reads SSSKYLVEFR…RKVNEYLNNP (114 aa). Disordered stretches follow at residues 128–149, 195–258, and 376–404; these read NNPP…LSAL, GSGG…TSPT, and FAKA…MSLD. Over residues 195 to 247 the composition is skewed to low complexity; that stretch reads GSGGPTTSSSSSSSRSQSAAVTPSSTTSSTRTTSAPVAPAAAPATTPSPAVSS. Positions 248–258 are enriched in polar residues; sequence NDGASAATSPT. Residues 278–390 enclose the DEUBAD domain; that stretch reads TGEGGQQVDL…QSTSSQKERE (113 aa). A compositionally biased stretch (basic and acidic residues) spans 386-395; sequence QKERESSEKK.

It belongs to the ADRM1 family. As to quaternary structure, component of the 19S proteasome regulatory particle complex. The 26S proteasome consists of a 20S core particle (CP) and two 19S regulatory subunits (RP).

It is found in the cytoplasm. The protein resides in the nucleus. Its function is as follows. Component of the 26S proteasome, a multiprotein complex involved in the ATP-dependent degradation of ubiquitinated proteins. This complex plays a key role in the maintenance of protein homeostasis by removing misfolded or damaged proteins, which could impair cellular functions, and by removing proteins whose functions are no longer required. Therefore, the proteasome participates in numerous cellular processes, including cell cycle progression, apoptosis, or DNA damage repair. Within the complex, functions as a proteasomal ubiquitin receptor. This is Proteasomal ubiquitin receptor ADRM1-B (adrm1-b) from Xenopus laevis (African clawed frog).